The chain runs to 460 residues: Cysteine--tRNA ligase (460 aa).

Position 28 (Cys28) interacts with Zn(2+). The 'HIGH' region motif lies at 30–40 (NTVYDFCHIGH). Zn(2+)-binding residues include Cys209, His234, and Glu238. The 'KMSKS' region motif lies at 266–270 (KMSKS). Lys269 is a binding site for ATP.

It belongs to the class-I aminoacyl-tRNA synthetase family. As to quaternary structure, monomer. Zn(2+) is required as a cofactor.

It localises to the cytoplasm. It carries out the reaction tRNA(Cys) + L-cysteine + ATP = L-cysteinyl-tRNA(Cys) + AMP + diphosphate. This Marinomonas sp. (strain MWYL1) protein is Cysteine--tRNA ligase.